The primary structure comprises 77 residues: Distinctin-like peptide (77 aa).

Positions leucine 1–cysteine 19 are cleaved as a signal peptide. A propeptide spanning residues glutamate 20–glutamate 39 is cleaved from the precursor.

Belongs to the frog skin active peptide (FSAP) family. Expressed by the skin glands.

The protein resides in the secreted. Its function is as follows. Has antimicrobial activity. This chain is Distinctin-like peptide, found in Pithecopus azureus (Orange-legged monkey tree frog).